The following is a 104-amino-acid chain: Large ribosomal subunit protein uL24 (104 aa).

It belongs to the universal ribosomal protein uL24 family. In terms of assembly, part of the 50S ribosomal subunit.

One of two assembly initiator proteins, it binds directly to the 5'-end of the 23S rRNA, where it nucleates assembly of the 50S subunit. Its function is as follows. One of the proteins that surrounds the polypeptide exit tunnel on the outside of the subunit. This chain is Large ribosomal subunit protein uL24, found in Clostridium perfringens (strain SM101 / Type A).